The sequence spans 245 residues: Actin-like protein 10 (245 aa).

Belongs to the actin family.

The protein is Actin-like protein 10 (ACTL10) of Homo sapiens (Human).